Reading from the N-terminus, the 169-residue chain is Zinc metalloproteinase-disintegrin-like mikarin (169 aa).

The Peptidase M12B domain maps to 14–57 (KYLEYVVVDNNMYRNYGNAGPCVMSAEISFEPLQEFSSCDIQEP). In terms of domain architecture, Disintegrin spans 65–129 (PAVCGNYYVE…PEICTGRSAK (65 aa)). Intrachain disulfides connect Cys-68–Cys-97, Cys-79–Cys-92, Cys-81–Cys-87, Cys-105–Cys-111, Cys-110–Cys-123, and Cys-150–Cys-161. Residues 116–118 (DCD) carry the D/ECD-tripeptide motif.

It belongs to the venom metalloproteinase (M12B) family. P-III subfamily. P-IIIa sub-subfamily. In terms of assembly, monomer. It depends on Zn(2+) as a cofactor. In terms of tissue distribution, expressed by the venom gland.

It localises to the secreted. With respect to regulation, inhibited by EDTA, but not by PMSF. Functionally, snake venom zinc metalloproteinase that calcium-independently catalyzes the conversion of prothrombin (F2) to alpha-thrombin through the formation of a thrombin intermediate. The protein is Zinc metalloproteinase-disintegrin-like mikarin of Micropechis ikaheca (New Guinean small-eyed snake).